The following is a 190-amino-acid chain: 3-isopropylmalate dehydratase small subunit (190 aa).

It belongs to the LeuD family. LeuD type 1 subfamily. In terms of assembly, heterodimer of LeuC and LeuD.

The enzyme catalyses (2R,3S)-3-isopropylmalate = (2S)-2-isopropylmalate. It participates in amino-acid biosynthesis; L-leucine biosynthesis; L-leucine from 3-methyl-2-oxobutanoate: step 2/4. Its function is as follows. Catalyzes the isomerization between 2-isopropylmalate and 3-isopropylmalate, via the formation of 2-isopropylmaleate. In Staphylococcus aureus (strain MSSA476), this protein is 3-isopropylmalate dehydratase small subunit.